A 396-amino-acid chain; its full sequence is Elongation factor Tu (396 aa).

Residues 10–206 (KPHVNVGTIG…ALDSYIPTPE (197 aa)) form the tr-type G domain. A G1 region spans residues 19 to 26 (GHVDHGKT). 19 to 26 (GHVDHGKT) is a binding site for GTP. Threonine 26 lines the Mg(2+) pocket. Residues 60 to 64 (GITIN) are G2. Residues 81–84 (DCPG) are G3. GTP is bound by residues 81 to 85 (DCPGH) and 136 to 139 (NKCD). The segment at 136 to 139 (NKCD) is G4. Residues 174-176 (SAL) form a G5 region.

This sequence belongs to the TRAFAC class translation factor GTPase superfamily. Classic translation factor GTPase family. EF-Tu/EF-1A subfamily. As to quaternary structure, monomer.

The protein localises to the cytoplasm. It catalyses the reaction GTP + H2O = GDP + phosphate + H(+). Its function is as follows. GTP hydrolase that promotes the GTP-dependent binding of aminoacyl-tRNA to the A-site of ribosomes during protein biosynthesis. The polypeptide is Elongation factor Tu (Azoarcus sp. (strain BH72)).